The chain runs to 302 residues: Putative cyclin-D6-1 (302 aa).

Belongs to the cyclin family. Cyclin D subfamily.

The sequence is that of Putative cyclin-D6-1 (CYCD6-1) from Arabidopsis thaliana (Mouse-ear cress).